Consider the following 161-residue polypeptide: Protein-export protein SecB (161 aa).

This sequence belongs to the SecB family. As to quaternary structure, homotetramer, a dimer of dimers. One homotetramer interacts with 1 SecA dimer.

It is found in the cytoplasm. Its function is as follows. One of the proteins required for the normal export of preproteins out of the cell cytoplasm. It is a molecular chaperone that binds to a subset of precursor proteins, maintaining them in a translocation-competent state. It also specifically binds to its receptor SecA. The polypeptide is Protein-export protein SecB (Shewanella putrefaciens (strain CN-32 / ATCC BAA-453)).